Here is a 697-residue protein sequence, read N- to C-terminus: MAAKLWNLLLVAASVHLVGSVEQLHQDLIHEFSCGHKYYRTFHLDEKRESLYVGALDKVYKLNLTNISLSDCERDSLTLEPTNIANCVSKGKSADFDCKNHIRVIQPMGDGSRLYICGTNAHSPKDWVVYSNLTHLQRHEYVPGIGVGIAKCPFDPEDSSTAVWVENGNPGDLPGLYSGTNAEFTKADTVIFRTDLYNLTTGRREYSFKRTLKYDSKWLDNPNFVGSFDVGEYVLFFFRETAVEYINCGKSVYSRVARVCKKDVGGKNILSQNWATFLKARLNCSIPGEFPFYFNEIQGVYKMPNTDKFFGVFSTSVTGLTGSAICSFTLKDIQEVFSGKFKEQATSSSAWLPVLPSRVPDPRPGECVNDTELLPDTVLNFIRSHPLMDGAVSHEGGKPVFYKRDVLFTQLVVDKLKVNLVGKNMEYIVYYAGTSTGQVYKVVQWYDSGGLPQSLLVDIFDVTPPEPVQALHLSKEYKSLYAASDNIVRQIELVMCHHRYSNCLQCARDPYCGWDRDSNSCKSYTPGLLQDVTNTSANLCEHSVMKKKLIVTWGQSIHLGCFLKVPEVLSSQTISWVHYTKDKGRYPIVYRPDKYIETSEHGLVLISVTDSDSGRYDCWLGGSLLCSYNITVDAHRCSAPGRSNDYQKIYSDWCHEFERSKIAMKTWERKQAQCSTKQNNSNQKTHPNDIFHSNPVA.

The signal sequence occupies residues 1–20 (MAAKLWNLLLVAASVHLVGS). A Sema domain is found at 21-493 (VEQLHQDLIH…SDNIVRQIEL (473 aa)). N-linked (GlcNAc...) asparagine glycans are attached at residues N63 and N66. A disulfide bond links C87 and C98. N-linked (GlcNAc...) asparagine glycosylation is found at N132, N198, and N283. Disulfide bonds link C260–C367 and C284–C326. The N-linked (GlcNAc...) asparagine glycan is linked to N369. 2 disulfides stabilise this stretch: C496-C512 and C506-C521. The 109-residue stretch at 526 to 634 (PGLLQDVTNT…LCSYNITVDA (109 aa)) folds into the Ig-like C2-type domain. N-linked (GlcNAc...) asparagine glycans are attached at residues N534, N629, and N679. A disulfide bond links C618 and C654. The segment covering 673–685 (QCSTKQNNSNQKT) has biased composition (polar residues). The tract at residues 673–697 (QCSTKQNNSNQKTHPNDIFHSNPVA) is disordered.

Belongs to the semaphorin family. Expressed in a gradient in the developing limb bud epithelium during Ti pioneer axon outgrowth.

The protein resides in the secreted. In terms of biological role, acts as a chemorepulsive guidance molecule critical for axon fasciculation and for determining both the initial direction and subsequent pathfinding events of the Ti axon projection. This is Semaphorin-2A (SEMA-2A) from Schistocerca gregaria (Desert locust).